We begin with the raw amino-acid sequence, 184 residues long: MRRGPRSLRGRDAPAPTPCVPAECFDLLVRHCVACGLLRTPRPKPAGASSPAPRTALQPQESVGAGAGEAALPLPGLLFGAPALLGLALVLALVLVGLVSWRRRQRRLRGASSAEAPDGDKDAPEPLDKVIILSPGISDATAPAWPPPGEDPGTTPPGHSVPVPATELGSTELVTTKTAGPEQQ.

The Extracellular portion of the chain corresponds to 1-78 (MRRGPRSLRG…EAALPLPGLL (78 aa)). The stretch at 18–35 (PCVPAECFDLLVRHCVAC) is one TNFR-Cys; truncated repeat. 2 disulfides stabilise this stretch: C19–C32 and C24–C35. Residues 26 to 31 (DLLVRH) form an essential for TNFSF13B/TALL1/BAFF/BLyS binding region. The segment at 43–62 (PKPAGASSPAPRTALQPQES) is disordered. Residues 79–99 (FGAPALLGLALVLALVLVGLV) form a helical; Signal-anchor for type III membrane protein membrane-spanning segment. Residues 100–184 (SWRRRQRRLR…TTKTAGPEQQ (85 aa)) lie on the Cytoplasmic side of the membrane. The disordered stretch occupies residues 107 to 184 (RLRGASSAEA…TTKTAGPEQQ (78 aa)). Residues 118 to 128 (DGDKDAPEPLD) show a composition bias toward basic and acidic residues. A compositionally biased stretch (polar residues) spans 168-184 (LGSTELVTTKTAGPEQQ).

As to expression, highly expressed in spleen and lymph node, and in resting B-cells. Detected at lower levels in activated B-cells, resting CD4+ T-cells, in thymus and peripheral blood leukocytes.

The protein resides in the membrane. B-cell receptor specific for TNFSF13B/TALL1/BAFF/BLyS. Promotes the survival of mature B-cells and the B-cell response. This Homo sapiens (Human) protein is Tumor necrosis factor receptor superfamily member 13C (TNFRSF13C).